The sequence spans 414 residues: Stork-head box protein ham-1 (414 aa).

The essential for association with cell cortex stretch occupies residues 1 to 31 (MTYLAVVLNGPKAKNGRKVFDSFLEQNRQMF). Residues 93–170 (QQVEQMHFVP…MADHYFVSVP (78 aa)) enclose the Winged helix Storkhead-box1 domain. The segment at 282 to 362 (ECQRKARRRN…SNEEAGSISD (81 aa)) is disordered. The tract at residues 285–295 (RKARRRNHPRR) is bi-partite nuclear localization signal. Residues 321–327 (PTRRRAR) form a nuclear localization signal region. Over residues 332–351 (LRSSTPNNSDSAYSISPPHT) the composition is skewed to polar residues.

Its subcellular location is the cytoplasm. It is found in the cell cortex. It localises to the nucleus. In terms of biological role, probable transcription factor. Required for asymmetric cell division in neuroblasts, perhaps acting by regulating spindle positioning and myosin polarization, and thus the position of the cleavage plane. Required to produce daughter cell size asymmetry in neuroblasts undergoing asymmetric cell division, usually giving rise to one precursor cell and one apoptotic cell. Positively modulates expression of the serine/threonine kinase pig-1/MELK during asymmetric division of the Q.a neuroblast. Plays a role in neural fate specification in several dopaminergic lineages, including the hermaphrodite-specific neuron (HSN)/phasmid neuron (PHB), acting in concert with the kinase, ham-1, and the T-box protein tbx-2 and the homeobox protein egl-5. In Caenorhabditis elegans, this protein is Stork-head box protein ham-1.